The chain runs to 552 residues: Urocanate hydratase (552 aa).

NAD(+) is bound by residues 49–50, Q127, 173–175, D193, 239–240, 260–264, 270–271, and Y319; these read GG, GMG, NA, QTSAH, and YI. C407 is an active-site residue. G489 contacts NAD(+).

It belongs to the urocanase family. NAD(+) serves as cofactor.

The protein resides in the cytoplasm. The enzyme catalyses 4-imidazolone-5-propanoate = trans-urocanate + H2O. It participates in amino-acid degradation; L-histidine degradation into L-glutamate; N-formimidoyl-L-glutamate from L-histidine: step 2/3. Functionally, catalyzes the conversion of urocanate to 4-imidazolone-5-propionate. The chain is Urocanate hydratase from Bacillus cereus (strain 03BB102).